The following is a 186-amino-acid chain: Ribosome-recycling factor (186 aa).

Residues 135–162 (DGMDGLKKAEKDGDIGQDESRAQSERVQ) are disordered.

It belongs to the RRF family.

Its subcellular location is the cytoplasm. In terms of biological role, responsible for the release of ribosomes from messenger RNA at the termination of protein biosynthesis. May increase the efficiency of translation by recycling ribosomes from one round of translation to another. In Sinorhizobium fredii (strain NBRC 101917 / NGR234), this protein is Ribosome-recycling factor.